The primary structure comprises 101 residues: Small ribosomal subunit protein eS24 (101 aa).

It belongs to the eukaryotic ribosomal protein eS24 family.

This chain is Small ribosomal subunit protein eS24, found in Methanosarcina barkeri (strain Fusaro / DSM 804).